We begin with the raw amino-acid sequence, 353 residues long: Alanine racemase (353 aa).

K33 (proton acceptor; specific for D-alanine) is an active-site residue. N6-(pyridoxal phosphate)lysine is present on K33. R129 is a binding site for substrate. Y250 functions as the Proton acceptor; specific for L-alanine in the catalytic mechanism. Residue M298 participates in substrate binding.

This sequence belongs to the alanine racemase family. The cofactor is pyridoxal 5'-phosphate.

The enzyme catalyses L-alanine = D-alanine. The protein operates within amino-acid biosynthesis; D-alanine biosynthesis; D-alanine from L-alanine: step 1/1. In terms of biological role, catalyzes the interconversion of L-alanine and D-alanine. May also act on other amino acids. This chain is Alanine racemase (alr), found in Azoarcus sp. (strain BH72).